The primary structure comprises 340 residues: Cell division protein FtsQ (340 aa).

Residues 1–41 (MQGLNPFHRDQGAGGRPAPVRPAPARPAPVAPRTPRKDPAP) are disordered. Residues 1-55 (MQGLNPFHRDQGAGGRPAPVRPAPARPAPVAPRTPRKDPAPSRLAYRLNRMMLRP) are Cytoplasmic-facing. Over residues 19 to 32 (PVRPAPARPAPVAP) the composition is skewed to pro residues. Residues 56 to 78 (LVRRLVHVGLPAFLAALVAGIWL) form a helical membrane-spanning segment. Residues 79-340 (SDDTRRANLT…NAAKAKKKSG (262 aa)) lie on the Periplasmic side of the membrane. Positions 104–172 (FMVKMMTIEG…GVLSAVVTER (69 aa)) constitute a POTRA domain. The disordered stretch occupies residues 308–340 (RQARGQPELGPDGTPLAPEATAGNAAKAKKKSG). Residues 324 to 333 (APEATAGNAA) are compositionally biased toward low complexity.

It belongs to the FtsQ/DivIB family. FtsQ subfamily.

The protein localises to the cell inner membrane. Functionally, essential cell division protein. This is Cell division protein FtsQ from Paracoccus denitrificans (strain Pd 1222).